A 269-amino-acid polypeptide reads, in one-letter code: Putative pyruvate, phosphate dikinase regulatory protein (269 aa).

ADP is bound at residue 147–154 (GLSRTSKT).

The protein belongs to the pyruvate, phosphate/water dikinase regulatory protein family. PDRP subfamily.

It catalyses the reaction N(tele)-phospho-L-histidyl/L-threonyl-[pyruvate, phosphate dikinase] + ADP = N(tele)-phospho-L-histidyl/O-phospho-L-threonyl-[pyruvate, phosphate dikinase] + AMP + H(+). The catalysed reaction is N(tele)-phospho-L-histidyl/O-phospho-L-threonyl-[pyruvate, phosphate dikinase] + phosphate + H(+) = N(tele)-phospho-L-histidyl/L-threonyl-[pyruvate, phosphate dikinase] + diphosphate. Bifunctional serine/threonine kinase and phosphorylase involved in the regulation of the pyruvate, phosphate dikinase (PPDK) by catalyzing its phosphorylation/dephosphorylation. This is Putative pyruvate, phosphate dikinase regulatory protein from Clostridium botulinum (strain 657 / Type Ba4).